The following is a 418-amino-acid chain: D-inositol 3-phosphate glycosyltransferase 1 (418 aa).

UDP-N-acetyl-alpha-D-glucosamine is bound by residues 24–25 and glycine 32; that span reads QP. 1D-myo-inositol 3-phosphate is bound by residues 29-34, lysine 87, histidine 115, serine 139, and glutamine 159; that span reads DAGGLN. UDP-N-acetyl-alpha-D-glucosamine-binding residues include arginine 233 and lysine 238. Residues tyrosine 308, arginine 309, and alanine 311 each contribute to the Mg(2+) site. Positions 321 and 329 each coordinate UDP-N-acetyl-alpha-D-glucosamine. Threonine 335 is a binding site for Mg(2+).

Belongs to the glycosyltransferase group 1 family. MshA subfamily. Homodimer.

The enzyme catalyses 1D-myo-inositol 3-phosphate + UDP-N-acetyl-alpha-D-glucosamine = 1D-myo-inositol 2-acetamido-2-deoxy-alpha-D-glucopyranoside 3-phosphate + UDP + H(+). Catalyzes the transfer of a N-acetyl-glucosamine moiety to 1D-myo-inositol 3-phosphate to produce 1D-myo-inositol 2-acetamido-2-deoxy-glucopyranoside 3-phosphate in the mycothiol biosynthesis pathway. The sequence is that of D-inositol 3-phosphate glycosyltransferase 1 from Catenulispora acidiphila (strain DSM 44928 / JCM 14897 / NBRC 102108 / NRRL B-24433 / ID139908).